The following is an 84-amino-acid chain: U21-theraphotoxin-Cg1a 1 (84 aa).

Residues 1–21 (MKVSVLITLAVLGVMFLLTSA) form the signal peptide. Positions 22-47 (EERGSDQMDSPAWLKSMEIIFQSEER) are excised as a propeptide. Intrachain disulfides connect Cys-49-Cys-63, Cys-56-Cys-68, and Cys-62-Cys-76. Val-82 is subject to Valine amide.

This sequence belongs to the neurotoxin 10 (Hwtx-1) family. 05 (F4a) subfamily. In terms of tissue distribution, expressed by the venom gland.

The protein resides in the secreted. Probable ion channel inhibitor. The sequence is that of U21-theraphotoxin-Cg1a 1 from Chilobrachys guangxiensis (Chinese earth tiger tarantula).